Reading from the N-terminus, the 578-residue chain is Glucans biosynthesis protein G (578 aa).

An N-terminal signal peptide occupies residues 1–37 (MIVSPCIAPRIPGTRLRKAMLAGVALVGLLSAGQLWA). The segment at 511 to 578 (VPVEAPKPAK…TWSYQLPADE (68 aa)) is disordered. Over residues 517–543 (KPAKDSKQDKAAAKHAHAKAEKAKAEQ) the composition is skewed to basic and acidic residues. The span at 544-554 (PAEQPAADAAS) shows a compositional bias: low complexity.

It belongs to the OpgD/OpgG family.

The protein localises to the periplasm. Its pathway is glycan metabolism; osmoregulated periplasmic glucan (OPG) biosynthesis. In terms of biological role, involved in the biosynthesis of osmoregulated periplasmic glucans (OPGs). The polypeptide is Glucans biosynthesis protein G (Pseudomonas entomophila (strain L48)).